The chain runs to 285 residues: N(G),N(G)-dimethylarginine dimethylaminohydrolase 1 (285 aa).

Ala-2 bears the N-acetylalanine mark. Positions 30, 73, 78, 79, 98, and 145 each coordinate substrate. His-173 (proton donor) is an active-site residue. Cys-222 is modified (S-nitrosocysteine). Val-268 lines the substrate pocket. Cys-274 carries the S-nitrosocysteine modification. The active-site Nucleophile is Cys-274. Cys-274 serves as a coordination point for Zn(2+).

As to quaternary structure, monomer. Widely distributed, highest concentrations found in brain, brain cortex and kidney (at protein level).

It catalyses the reaction N(omega),N(omega)-dimethyl-L-arginine + H2O = dimethylamine + L-citrulline. The catalysed reaction is N(omega)-methyl-L-arginine + H2O = L-citrulline + methylamine. Its activity is regulated as follows. Copurifies with a tightly bound zinc ion. Activated by release of zinc. His and other agents that promote the release of bound zinc ions activate the enzyme (in vitro). Inhibited by S-nitrosylation. Zinc protects the protein against S-nitrosylation. Its function is as follows. Hydrolyzes N(G),N(G)-dimethyl-L-arginine (ADMA) and N(G)-monomethyl-L-arginine (MMA) which act as inhibitors of NOS. Has therefore a role in the regulation of nitric oxide generation. This Bos taurus (Bovine) protein is N(G),N(G)-dimethylarginine dimethylaminohydrolase 1 (DDAH1).